Reading from the N-terminus, the 243-residue chain is Triosephosphate isomerase (243 aa).

Position 9–11 (9–11) interacts with substrate; it reads NWK. The Electrophile role is filled by H96. E165 serves as the catalytic Proton acceptor. Substrate-binding positions include G171, S204, and 225-226; that span reads GG.

It belongs to the triosephosphate isomerase family. As to quaternary structure, homodimer.

It is found in the cytoplasm. It catalyses the reaction D-glyceraldehyde 3-phosphate = dihydroxyacetone phosphate. It participates in carbohydrate biosynthesis; gluconeogenesis. The protein operates within carbohydrate degradation; glycolysis; D-glyceraldehyde 3-phosphate from glycerone phosphate: step 1/1. In terms of biological role, involved in the gluconeogenesis. Catalyzes stereospecifically the conversion of dihydroxyacetone phosphate (DHAP) to D-glyceraldehyde-3-phosphate (G3P). This chain is Triosephosphate isomerase, found in Prochlorococcus marinus (strain MIT 9313).